The following is a 130-amino-acid chain: MGIVGVGIDLVSIPDFAEQVDQPGTVFAETFTPGERRDASDKSSSAARHLAARWAAKEAVIKAWSGSRFAQRPVLPEDIHRDIEVVTDMWGRPRVRLTGAIAEYLADVTIHVSLTHEGDTAAAVAILEAP.

Mg(2+)-binding residues include aspartate 9 and glutamate 58.

It belongs to the P-Pant transferase superfamily. AcpS family. It depends on Mg(2+) as a cofactor.

The protein localises to the cytoplasm. The catalysed reaction is apo-[ACP] + CoA = holo-[ACP] + adenosine 3',5'-bisphosphate + H(+). In terms of biological role, transfers the 4'-phosphopantetheine moiety from coenzyme A to a Ser of acyl-carrier-protein. The chain is Holo-[acyl-carrier-protein] synthase from Mycobacterium bovis (strain ATCC BAA-935 / AF2122/97).